The primary structure comprises 78 residues: Large ribosomal subunit protein bL28 (78 aa).

Positions M1–N26 are disordered.

This sequence belongs to the bacterial ribosomal protein bL28 family.

This is Large ribosomal subunit protein bL28 from Corynebacterium jeikeium (strain K411).